The primary structure comprises 263 residues: uncharacterized protein (263 aa).

One can recognise an ABC transporter domain in the interval 12-247 (LETQNLAIGY…ENLAKIYRTS (236 aa)). Position 44–51 (44–51 (GANGAGKS)) interacts with ATP.

The protein belongs to the ABC transporter superfamily.

This is an uncharacterized protein from Haemophilus influenzae (strain ATCC 51907 / DSM 11121 / KW20 / Rd).